The primary structure comprises 136 residues: UPF0213 protein AHA_3736 (136 aa).

Residues 17 to 92 form the GIY-YIG domain; the sequence is SHWFIYMVRT…KQQSKAFKEQ (76 aa). The tract at residues 114 to 136 is disordered; sequence QKRPRYAAAKEGSDNRECQRQVD. Over residues 124-136 the composition is skewed to basic and acidic residues; the sequence is EGSDNRECQRQVD.

This sequence belongs to the UPF0213 family.

This is UPF0213 protein AHA_3736 from Aeromonas hydrophila subsp. hydrophila (strain ATCC 7966 / DSM 30187 / BCRC 13018 / CCUG 14551 / JCM 1027 / KCTC 2358 / NCIMB 9240 / NCTC 8049).